Consider the following 80-residue polypeptide: Large ribosomal subunit protein bL31B (80 aa).

This sequence belongs to the bacterial ribosomal protein bL31 family. Type B subfamily. As to quaternary structure, part of the 50S ribosomal subunit.

This is Large ribosomal subunit protein bL31B from Xanthomonas campestris pv. campestris (strain 8004).